Consider the following 183-residue polypeptide: MRAASLFLLFLPAGLLAQGQYDLDPLPPYPDHVQYTHYSEQIENPDYYDYPEMTPRPPEEQFQFQSQQQVQQEVIPAPTLEPGTVETEPTEPGPLDCREEQYPCTRLYSIHKPCKQCLNEVCFYSLRRVYVVNKEICVRTVCAQEELLRADLCRDKFSKCGVLASSGLCQSVAAACARSCGGC.

Positions 1 to 17 (MRAASLFLLFLPAGLLA) are cleaved as a signal peptide. Gln18 is modified (pyrrolidone carboxylic acid). Gln20 participates in a covalent cross-link: Isoglutamyl lysine isopeptide (Gln-Lys) (interchain with K-?). 3 positions are modified to sulfotyrosine: Tyr47, Tyr48, and Tyr50. Residues 153–183 (CRDKFSKCGVLASSGLCQSVAAACARSCGGC) form the ShKT domain. Intrachain disulfides connect Cys153-Cys183, Cys160-Cys176, and Cys169-Cys180.

It belongs to the MFAP family. In terms of assembly, forms a ternary complex with BGN and ELN. Interacts with FBN1 (via N-terminal domain) and FBN2. O-glycosylated; glycans consist of Gal(beta1-3)GalNAc. In terms of processing, forms intermolecular disulfide bonds either with other MAGP-1 molecules or with other components of the microfibrils. Post-translationally, forms transglutaminase cross-links with tropoelastin.

It localises to the secreted. Its subcellular location is the extracellular space. The protein localises to the extracellular matrix. In terms of biological role, component of the elastin-associated microfibrils. The polypeptide is Microfibrillar-associated protein 2 (MFAP2) (Bos taurus (Bovine)).